An 801-amino-acid polypeptide reads, in one-letter code: Phenylalanine--tRNA ligase beta subunit (801 aa).

The region spanning 39–152 (ARAFSGVVVG…TDAPIGTDIR (114 aa)) is the tRNA-binding domain. The region spanning 407–482 (PARAPITLPI…RIYGYDNIPS (76 aa)) is the B5 domain. The Mg(2+) site is built by Asp460, Asp466, Glu469, and Glu470. The region spanning 706-799 (SKFPQVRRDI…LTVEHSAQLR (94 aa)) is the FDX-ACB domain.

The protein belongs to the phenylalanyl-tRNA synthetase beta subunit family. Type 1 subfamily. As to quaternary structure, tetramer of two alpha and two beta subunits. It depends on Mg(2+) as a cofactor.

It localises to the cytoplasm. The catalysed reaction is tRNA(Phe) + L-phenylalanine + ATP = L-phenylalanyl-tRNA(Phe) + AMP + diphosphate + H(+). The protein is Phenylalanine--tRNA ligase beta subunit of Psychrobacter arcticus (strain DSM 17307 / VKM B-2377 / 273-4).